The primary structure comprises 384 residues: GTPase Obg (384 aa).

Positions Met-1–Leu-159 constitute an Obg domain. The tract at residues Ala-20 to Trp-46 is disordered. Gly residues predominate over residues Gly-33–Gly-43. Positions Ala-160–Thr-348 constitute an OBG-type G domain. GTP contacts are provided by residues Gly-166–Ser-173, Phe-191–His-195, Asp-213–Gly-216, Asn-284–Asp-287, and Ser-329–Leu-331. Positions 173 and 193 each coordinate Mg(2+).

Belongs to the TRAFAC class OBG-HflX-like GTPase superfamily. OBG GTPase family. In terms of assembly, monomer. It depends on Mg(2+) as a cofactor.

Its subcellular location is the cytoplasm. Functionally, an essential GTPase which binds GTP, GDP and possibly (p)ppGpp with moderate affinity, with high nucleotide exchange rates and a fairly low GTP hydrolysis rate. Plays a role in control of the cell cycle, stress response, ribosome biogenesis and in those bacteria that undergo differentiation, in morphogenesis control. The sequence is that of GTPase Obg from Neisseria meningitidis serogroup B (strain ATCC BAA-335 / MC58).